The chain runs to 444 residues: N-succinylarginine dihydrolase (444 aa).

Residues 19-28, Asn-110, and 137-138 contribute to the substrate site; these read AGLSFGNVAS and HR. The active site involves Glu-174. Residue Arg-214 participates in substrate binding. His-250 is a catalytic residue. Substrate-binding residues include Asp-252 and Asn-362. Cys-368 serves as the catalytic Nucleophile.

It belongs to the succinylarginine dihydrolase family. As to quaternary structure, homodimer.

It catalyses the reaction N(2)-succinyl-L-arginine + 2 H2O + 2 H(+) = N(2)-succinyl-L-ornithine + 2 NH4(+) + CO2. The protein operates within amino-acid degradation; L-arginine degradation via AST pathway; L-glutamate and succinate from L-arginine: step 2/5. Catalyzes the hydrolysis of N(2)-succinylarginine into N(2)-succinylornithine, ammonia and CO(2). In Shewanella putrefaciens (strain CN-32 / ATCC BAA-453), this protein is N-succinylarginine dihydrolase.